Here is a 576-residue protein sequence, read N- to C-terminus: K(+)/H(+) antiporter NhaP2 (576 aa).

The next 13 helical transmembrane spans lie at 6–26, 34–54, 58–78, 87–107, 109–129, 163–183, 185–205, 219–239, 242–262, 271–291, 299–319, 335–355, and 359–379; these read INSF…LSPM, ILLI…GGIL, YSTA…DGGM, VALW…TSIT, MMAA…GAIV, PMAV…DTEM, FSFM…LGLG, LADG…YAAS, LGGS…NKPT, VLDG…GLLL, ILIP…PVAV, WFIS…VFPM, and LPGA…SLLV. The 82-residue stretch at 405-486 folds into the RCK C-terminal domain; it reads SGVEIYPSSE…LEALSNLFSQ (82 aa).

Belongs to the monovalent cation:proton antiporter 1 (CPA1) transporter (TC 2.A.36) family. NhaP2 subfamily.

It localises to the cell inner membrane. It catalyses the reaction K(+)(in) + H(+)(out) = K(+)(out) + H(+)(in). K(+)/H(+) antiporter that extrudes potassium in exchange for external protons and maintains the internal concentration of potassium under toxic levels. In Shewanella baltica (strain OS223), this protein is K(+)/H(+) antiporter NhaP2.